Here is a 601-residue protein sequence, read N- to C-terminus: Elongation factor 4 (601 aa).

The region spanning Glu5–Lys187 is the tr-type G domain. Residues Asp17–Thr22 and Asn134–Asp137 each bind GTP.

The protein belongs to the TRAFAC class translation factor GTPase superfamily. Classic translation factor GTPase family. LepA subfamily.

The protein localises to the cell inner membrane. It catalyses the reaction GTP + H2O = GDP + phosphate + H(+). Functionally, required for accurate and efficient protein synthesis under certain stress conditions. May act as a fidelity factor of the translation reaction, by catalyzing a one-codon backward translocation of tRNAs on improperly translocated ribosomes. Back-translocation proceeds from a post-translocation (POST) complex to a pre-translocation (PRE) complex, thus giving elongation factor G a second chance to translocate the tRNAs correctly. Binds to ribosomes in a GTP-dependent manner. The protein is Elongation factor 4 of Treponema denticola (strain ATCC 35405 / DSM 14222 / CIP 103919 / JCM 8153 / KCTC 15104).